Consider the following 241-residue polypeptide: Caffeoyl-CoA O-methyltransferase (241 aa).

Lys-14 is a substrate binding site. S-adenosyl-L-methionine contacts are provided by residues Thr-58, Glu-80, 82-83 (GV), Ser-88, Asp-106, and Ala-135. Residue Asp-158 coordinates substrate. A divalent metal cation is bound at residue Asp-158. Residue Asp-160 coordinates S-adenosyl-L-methionine. Asp-184 and Asn-185 together coordinate a divalent metal cation.

This sequence belongs to the class I-like SAM-binding methyltransferase superfamily. Cation-dependent O-methyltransferase family. CCoAMT subfamily. It depends on a divalent metal cation as a cofactor.

It catalyses the reaction (E)-caffeoyl-CoA + S-adenosyl-L-methionine = (E)-feruloyl-CoA + S-adenosyl-L-homocysteine + H(+). Its pathway is aromatic compound metabolism; phenylpropanoid biosynthesis. In terms of biological role, methylates caffeoyl-CoA to feruloyl-CoA and 5-hydroxyferuloyl-CoA to sinapoyl-CoA. Plays a role in the synthesis of feruloylated polysaccharides. Involved in the reinforcement of the plant cell wall. Also involved in the responding to wounding or pathogen challenge by the increased formation of cell wall-bound ferulic acid polymers. The sequence is that of Caffeoyl-CoA O-methyltransferase from Stellaria longipes (Longstalk starwort).